Reading from the N-terminus, the 230-residue chain is Octanoyltransferase (230 aa).

The BPL/LPL catalytic domain maps to 40–218 (PSLDDVLILL…CFAEVFGVEL (179 aa)). Residues 82 to 89 (RGGEVTYH), 149 to 151 (AIG), and 162 to 164 (GFA) each bind substrate. Residue C180 is the Acyl-thioester intermediate of the active site.

This sequence belongs to the LipB family.

The protein resides in the cytoplasm. The catalysed reaction is octanoyl-[ACP] + L-lysyl-[protein] = N(6)-octanoyl-L-lysyl-[protein] + holo-[ACP] + H(+). It functions in the pathway protein modification; protein lipoylation via endogenous pathway; protein N(6)-(lipoyl)lysine from octanoyl-[acyl-carrier-protein]: step 1/2. Its function is as follows. Catalyzes the transfer of endogenously produced octanoic acid from octanoyl-acyl-carrier-protein onto the lipoyl domains of lipoate-dependent enzymes. Lipoyl-ACP can also act as a substrate although octanoyl-ACP is likely to be the physiological substrate. The sequence is that of Octanoyltransferase from Nostoc punctiforme (strain ATCC 29133 / PCC 73102).